The sequence spans 837 residues: Protein translocase subunit SecA 1 (837 aa).

Residues Gln85, 103–107 (GEGKT), and Asp492 contribute to the ATP site. Over residues 787-806 (QEVAKGEAVHPKEDGEEPKK) the composition is skewed to basic and acidic residues. The disordered stretch occupies residues 787–813 (QEVAKGEAVHPKEDGEEPKKKPIRKAV). Positions 821, 823, 832, and 833 each coordinate Zn(2+).

This sequence belongs to the SecA family. In terms of assembly, monomer and homodimer. Part of the essential Sec protein translocation apparatus which comprises SecA, SecYEG and auxiliary proteins SecDF. Other proteins may also be involved. Requires Zn(2+) as cofactor.

The protein localises to the cell membrane. It is found in the cytoplasm. It catalyses the reaction ATP + H2O + cellular proteinSide 1 = ADP + phosphate + cellular proteinSide 2.. Its function is as follows. Part of the Sec protein translocase complex. Interacts with the SecYEG preprotein conducting channel. Has a central role in coupling the hydrolysis of ATP to the transfer of proteins into and across the cell membrane, serving as an ATP-driven molecular motor driving the stepwise translocation of polypeptide chains across the membrane. This is Protein translocase subunit SecA 1 from Geobacillus thermodenitrificans (strain NG80-2).